Here is a 280-residue protein sequence, read N- to C-terminus: Probable 2-(5''-triphosphoribosyl)-3'-dephosphocoenzyme-A synthase (280 aa).

Belongs to the CitG/MdcB family.

It catalyses the reaction 3'-dephospho-CoA + ATP = 2'-(5''-triphospho-alpha-D-ribosyl)-3'-dephospho-CoA + adenine. This chain is Probable 2-(5''-triphosphoribosyl)-3'-dephosphocoenzyme-A synthase, found in Lactiplantibacillus plantarum (strain ATCC BAA-793 / NCIMB 8826 / WCFS1) (Lactobacillus plantarum).